We begin with the raw amino-acid sequence, 308 residues long: Ceramide synthase 1 LOH3 (308 aa).

6 helical membrane passes run 25–45 (VLPL…RFVF), 82–102 (CVYY…EPWF), 128–148 (LLYM…VFWE), 154–174 (FGVS…SYVC), 213–233 (FILF…FWIL), and 258–278 (YMFN…WVLM). One can recognise a TLC domain in the interval 73–287 (RKFKESAWKC…MYRMLVKQIQ (215 aa)). Residues S298 and S300 each carry the phosphoserine modification.

Expressed ubiquitously at low levels. Not observed in pollen.

It localises to the endoplasmic reticulum membrane. It carries out the reaction (4R)-hydroxysphinganine + a fatty acyl-CoA = an N-acyl-(4R)-4-hydroxysphinganine + CoA + H(+). It catalyses the reaction a sphingoid base + tetracosanoyl-CoA = an N-tetracosanoyl-sphingoid base + CoA + H(+). The enzyme catalyses (4R)-hydroxysphinganine + hexadecanoyl-CoA = N-hexadecanoyl-(4R)-hydroxysphinganine + CoA + H(+). The catalysed reaction is (4R)-hydroxysphinganine + octadecanoyl-CoA = N-octadecanoyl-(4R)-hydroxysphinganine + CoA + H(+). It carries out the reaction (4R)-hydroxysphinganine + eicosanoyl-CoA = N-eicosanoyl-(4R)-hydroxysphinganine + CoA + H(+). It catalyses the reaction docosanoyl-CoA + (4R)-hydroxysphinganine = N-docosanoyl-(4R)-hydroxysphinganine + CoA + H(+). The enzyme catalyses hexacosanoyl-CoA + (4R)-hydroxysphinganine = N-hexacosanoyl-(4R)-hydroxysphinganine + CoA + H(+). The catalysed reaction is tetracosanoyl-CoA + (4R)-hydroxysphinganine = N-tetracosanoyl-(4R)-hydroxysphinganine + CoA + H(+). It carries out the reaction tetracosanoyl-CoA + sphing-4-enine = N-tetracosanoyl-sphing-4-enine + CoA + H(+). It catalyses the reaction sphinga-(4E,8Z)-dienine + tetracosanoyl-CoA = N-tetracosanoylsphinga-(4E,8Z)-dienine + CoA + H(+). The enzyme catalyses sphinga-(4E,8E)-dienine + tetracosanoyl-CoA = N-tetracosanoylsphinga-(4E,8E)-dienine + CoA + H(+). The catalysed reaction is (4R)-hydroxysphing-(8Z)-enine + tetracosanoyl-CoA = N-tetracosanoyl-(4R)-hydroxysphing-(8Z)-enine + CoA + H(+). It carries out the reaction (4R)-hydroxysphing-(8E)-enine + tetracosanoyl-CoA = N-tetracosanoyl-(4R)-hydroxysphing-(8E)-enine + CoA + H(+). It participates in sphingolipid metabolism. With respect to regulation, inhibited by the mycotoxin fumonisin B(1), a sphingosine analog mycotoxins produced by pathogenic fungi. Repressed by divalent cation such as magnesium Mg(2+), copper Cu(2+), zinc Zn(2+), manganese Mn(2+), calcium Ca(2+) and cobalt Co(2+). In terms of biological role, essential for plant growth, promotes cell division in root meristems. Catalyzes the biosynthesis of ceramide sphingolipids with C(16) to C(28) fatty acids, structural membrane lipids involved in membrane trafficking (e.g. early endosomes) and cell polarity (e.g. polar auxin transport related proteins); active on a broad substrate spectrum, both regarding chain lengths of fatty acids and the sphingoid base, such as long-chain base (LCB) phytosphingosine (t18:0). Mediates resistance to sphinganine-analog mycotoxins (SAMs, e.g. fumonisin B(1)) by restoring the sphingolipid biosynthesis. Could salvage the transport of GPI-anchored proteins from the endoplasmic reticulum to the Golgi apparatus in ceramides-depleted cells after SAM exposure. Contributes to hypoxic conditions tolerance (e.g. submergences), especially in the dark, by promoting the formation of very-long-chain (VLC) ceramide species (22:1, 24:1 and 26:1) and of VLC unsaturated ceramides, which are modulating CTR1-mediated ethylene signaling leading to endoplasmic reticulum (ER)-to-nucleus translocation of EIN2 and EIN3. This Arabidopsis thaliana (Mouse-ear cress) protein is Ceramide synthase 1 LOH3.